The primary structure comprises 449 residues: METTSEKQGRILLVDDESAILRTFRYCLEDEGYSVATASSAPQAEALLQRQVFDLCFLDLRLGEDNGLDVLAQMRVQAPWMRVVIVTAHSAVDTAVDAMQAGAVDYLVKPCSPDQLRLAAAKQLEVRQLTARLEALEDEVRRQGDGLESHSPAMAAVLETARQVAATDANILILGESGSGKGELARAIHTWSKRAKKPQVTINCPSLTAELMESELFGHSRGAFTGATESTLGRVSQADGGTLFLDEIGDFPLTLQPKLLRFIQDKEYERVGDPVTRRADVRILAATNRDLGAMVAQGQFREDLLYRLNVIVLNLPPLRERAEDILGLAERFLARFVKDYGRPARGFSEAAREAMRQYPWPGNVRELRNVIERASIICNQELVDVDHLGFSAAQSASSAPRIGESLSLEDLEKAHITAVMASSATLDQAAKTLGIDASTLYRKRKQYGL.

The Response regulatory domain occupies 10–124 (RILLVDDESA…QLRLAAAKQL (115 aa)). Residue Asp59 is modified to 4-aspartylphosphate. The region spanning 147-376 (LESHSPAMAA…LRNVIERASI (230 aa)) is the Sigma-54 factor interaction domain. ATP is bound by residues 175 to 182 (GESGSGKG) and 238 to 247 (ADGGTLFLDE). A DNA-binding region (H-T-H motif) is located at residues 426-445 (LDQAAKTLGIDASTLYRKRK).

Post-translationally, phosphorylated by KinB.

Its pathway is glycan biosynthesis; alginate biosynthesis [regulation]. Member of the two-component regulatory system AlgB/KinB involved in regulation of alginate biosynthesis genes. Positive regulator of the alginate biosynthetic gene AlgD. The chain is Alginate biosynthesis transcriptional regulatory protein AlgB (algB) from Pseudomonas aeruginosa (strain ATCC 15692 / DSM 22644 / CIP 104116 / JCM 14847 / LMG 12228 / 1C / PRS 101 / PAO1).